A 65-amino-acid polypeptide reads, in one-letter code: Large ribosomal subunit protein bL35 (65 aa).

The disordered stretch occupies residues Met1–Lys23. Over residues Ala10–Lys23 the composition is skewed to basic residues.

Belongs to the bacterial ribosomal protein bL35 family.

This is Large ribosomal subunit protein bL35 from Acidithiobacillus ferrooxidans (strain ATCC 53993 / BNL-5-31) (Leptospirillum ferrooxidans (ATCC 53993)).